Consider the following 337-residue polypeptide: Phenylalanine--tRNA ligase alpha subunit (337 aa).

Glu-252 serves as a coordination point for Mg(2+).

The protein belongs to the class-II aminoacyl-tRNA synthetase family. Phe-tRNA synthetase alpha subunit type 1 subfamily. In terms of assembly, tetramer of two alpha and two beta subunits. Mg(2+) is required as a cofactor.

Its subcellular location is the cytoplasm. The catalysed reaction is tRNA(Phe) + L-phenylalanine + ATP = L-phenylalanyl-tRNA(Phe) + AMP + diphosphate + H(+). The polypeptide is Phenylalanine--tRNA ligase alpha subunit (Francisella philomiragia subsp. philomiragia (strain ATCC 25017 / CCUG 19701 / FSC 153 / O#319-036)).